The primary structure comprises 486 residues: GDP-Man:Man(3)GlcNAc(2)-PP-Dol alpha-1,2-mannosyltransferase (486 aa).

The Lumenal portion of the chain corresponds to 1–16 (MAGPMCLCGMMRLLTA). The chain crosses the membrane as a helical span at residues 17-37 (LFIPVLITSVGLCLIFVLLFI). The Cytoplasmic portion of the chain corresponds to 38–229 (CTRLWVQRKK…SNNPVLSRLK (192 aa)). Residues 230–250 (LIYYYLFALFYGWVGSCSDVI) constitute an intramembrane region (helical). Residues 251–393 (MVNSTWTFSH…IGLHTMWNEH (143 aa)) are Cytoplasmic-facing. An intramembrane region (helical) is located at residues 394–414 (FGIGIVECMAAGTIILAHNSG). At 415 to 486 (GPKLDIVVPH…FLASSEPLFK (72 aa)) the chain is on the cytoplasmic side.

It belongs to the glycosyltransferase group 1 family. Glycosyltransferase 4 subfamily.

It is found in the endoplasmic reticulum membrane. The catalysed reaction is an alpha-D-Man-(1-&gt;3)-[alpha-D-Man-(1-&gt;6)]-beta-D-Man-(1-&gt;4)-beta-D-GlcNAc-(1-&gt;4)-alpha-D-GlcNAc-diphospho-di-trans,poly-cis-dolichol + 2 GDP-alpha-D-mannose = an alpha-D-Man-(1-&gt;2)-alpha-D-Man-(1-&gt;2)-alpha-D-Man-(1-&gt;3)-[alpha-D-Man-(1-&gt;6)]-beta-D-Man-(1-&gt;4)-beta-D-GlcNAc-(1-&gt;4)-alpha-D-GlcNAc-diphospho-di-trans,poly-cis-dolichol + 2 GDP + 2 H(+). It functions in the pathway protein modification; protein glycosylation. Its function is as follows. GDP-Man:Man(3)GlcNAc(2)-PP-Dol alpha-1,2-mannosyltransferase that operates in the biosynthetic pathway of dolichol-linked oligosaccharides, the glycan precursors employed in protein asparagine (N)-glycosylation. The assembly of dolichol-linked oligosaccharides begins on the cytosolic side of the endoplasmic reticulum membrane and finishes in its lumen. The sequential addition of sugars to dolichol pyrophosphate produces dolichol-linked oligosaccharides containing fourteen sugars, including two GlcNAcs, nine mannoses and three glucoses. Once assembled, the oligosaccharide is transferred from the lipid to nascent proteins by oligosaccharyltransferases. Catalyzes, on the cytoplasmic face of the endoplasmic reticulum, the addition of the fourth and fifth mannose residues to the dolichol-linked oligosaccharide chain, to produce Man(5)GlcNAc(2)-PP-dolichol core oligosaccharide. Man(5)GlcNAc(2)-PP-dolichol is a substrate for ALG3, the following enzyme in the biosynthetic pathway. The chain is GDP-Man:Man(3)GlcNAc(2)-PP-Dol alpha-1,2-mannosyltransferase (alg11) from Xenopus laevis (African clawed frog).